A 1339-amino-acid chain; its full sequence is DNA polymerase alpha catalytic subunit (1339 aa).

Disordered stretches follow at residues 1–29 (MEDWVSCRSEEQKRCEEKGQSTFDESEEE) and 60–89 (AKRRKPRKSGKVIATQKCAQPQNQHRHQQK). The segment covering 8–19 (RSEEQKRCEEKG) has biased composition (basic and acidic residues). Residues cysteine 1179, cysteine 1182, cysteine 1215, cysteine 1218, cysteine 1235, cysteine 1244, cysteine 1274, and cysteine 1289 each coordinate Zn(2+). The CysA-type zinc finger occupies 1179 to 1218 (CTHCQLVVPVDPHKYINDMFSSREKPPPTAPFELYVCFNC). The short motif at 1244 to 1274 (CSGGNVASVRALRAQFTYLRAMFDVPQALNC) is the CysB motif element.

It belongs to the DNA polymerase type-B family.

It localises to the nucleus. The catalysed reaction is DNA(n) + a 2'-deoxyribonucleoside 5'-triphosphate = DNA(n+1) + diphosphate. Polymerase alpha in a complex with DNA primase is a replicative polymerase. The chain is DNA polymerase alpha catalytic subunit from Trypanosoma brucei brucei.